Reading from the N-terminus, the 247-residue chain is DNA polymerase sliding clamp (247 aa).

It belongs to the PCNA family. As to quaternary structure, homotrimer. The subunits circularize to form a toroid; DNA passes through its center. Replication factor C (RFC) is required to load the toroid on the DNA.

In terms of biological role, sliding clamp subunit that acts as a moving platform for DNA processing. Responsible for tethering the catalytic subunit of DNA polymerase and other proteins to DNA during high-speed replication. The chain is DNA polymerase sliding clamp from Methanoregula boonei (strain DSM 21154 / JCM 14090 / 6A8).